The following is a 338-amino-acid chain: N-acetyl-gamma-glutamyl-phosphate reductase (338 aa).

Cysteine 148 is an active-site residue.

This sequence belongs to the NAGSA dehydrogenase family. Type 1 subfamily.

Its subcellular location is the cytoplasm. It carries out the reaction N-acetyl-L-glutamate 5-semialdehyde + phosphate + NADP(+) = N-acetyl-L-glutamyl 5-phosphate + NADPH + H(+). Its pathway is amino-acid biosynthesis; L-arginine biosynthesis; N(2)-acetyl-L-ornithine from L-glutamate: step 3/4. Functionally, catalyzes the NADPH-dependent reduction of N-acetyl-5-glutamyl phosphate to yield N-acetyl-L-glutamate 5-semialdehyde. This chain is N-acetyl-gamma-glutamyl-phosphate reductase, found in Leptospira borgpetersenii serovar Hardjo-bovis (strain JB197).